The sequence spans 1588 residues: Paternally-expressed gene 3 protein (1588 aa).

The 83-residue stretch at 46–128 (HQRFRNLIYV…TLLENYKEMY (83 aa)) folds into the SCAN box domain. 3 disordered regions span residues 128 to 231 (YQPE…YQNV), 265 to 304 (GHSH…RRGI), and 317 to 347 (KFIK…MSDD). The span at 129–142 (QPEDDNNSDVTSDD) shows a compositional bias: acidic residues. Composition is skewed to basic and acidic residues over residues 143–152 (DMTRNRRESS), 160–181 (FSDR…DRWS), 205–224 (FEMD…RSQD), and 293–304 (PEAKKSTHRRGI). 3 C2H2-type zinc fingers span residues 452–474 (YVCD…QIMH), 505–527 (FECK…RKIH), and 563–585 (YECR…QKIH). Over residues 588–607 (DDKDNEREHERERERERGET) the composition is skewed to basic and acidic residues. The segment at 588–608 (DDKDNEREHERERERERGETF) is disordered. Residues 627-649 (YECKVCGETFLHSSSLKEHQKIH) form a C2H2-type 4 zinc finger. Disordered regions lie at residues 839 to 889 (VASK…SKNR) and 905 to 929 (QKSV…SSNV). Residues 868-881 (LNDKRQKIPARENP) are compositionally biased toward basic and acidic residues. Residues 969-991 (YECQECGECFAHSSDLTEHQKIH) form a C2H2-type 5 zinc finger. The disordered stretch occupies residues 1056-1104 (EKSHGEESQGENTDGEETHSEETHGQETIEDPVIQGSDMEDPQKDDPDD). Positions 1071-1082 (EETHSEETHGQE) are enriched in basic and acidic residues. 5 consecutive C2H2-type zinc fingers follow at residues 1107-1129 (YECE…QKVH), 1163-1185 (YECP…QRIH), 1225-1247 (IRCL…MRLH), 1282-1304 (FECA…VTVH), and 1332-1354 (YECK…KELH). The segment covering 1396–1415 (EPEVEAAEPEVEAAEPEVEA) has biased composition (acidic residues). The segment at 1396–1495 (EPEVEAAEPE…GIEDPEEGED (100 aa)) is disordered. 7 tandem repeats follow at residues 1397–1403 (PEVEAAE), 1404–1410 (PEVEAAE), 1411–1417 (PEVEAAE), 1418–1422 (PNGEA), 1425–1429 (PDGEA), 1432–1436 (PIGEA), and 1439–1443 (PNGEA). Residues 1397–1417 (PEVEAAEPEVEAAEPEVEAAE) are 3 X 7 AA repeat of P-E-V-E-A-A-E. The tract at residues 1418-1443 (PNGEAEGPDGEAAEPIGEAGQPNGEA) is 4 X 5 AA repeat of P-X-G-E-A. 2 stretches are compositionally biased toward acidic residues: residues 1449-1466 (DADE…ERAE) and 1475-1495 (PEGD…EGED). 2 C2H2-type zinc fingers span residues 1505–1527 (YDCH…LKTH) and 1564–1586 (FKCD…QNTH).

This sequence belongs to the krueppel C2H2-type zinc-finger protein family. In terms of assembly, homodimer. Interacts with SIAH1A and SIAH2. Interacts with TRAF2. In terms of tissue distribution, brain, glial cells, astrocytes, embryo, placenta, testis, ovary and uterus. In the placenta it is found in the layer of villous cytotrophoblast cells while in the ovary it is found in the cells of the ovarian stroma including the thecal layers around the follicles. Expression is highly repressed in glioma cell lines.

It localises to the nucleus. Its subcellular location is the cytoplasm. Induces apoptosis in cooperation with SIAH1A. Acts as a mediator between p53/TP53 and BAX in a neuronal death pathway that is activated by DNA damage. Acts synergistically with TRAF2 and inhibits TNF induced apoptosis through activation of NF-kappa-B. Possesses a tumor suppressing activity in glioma cells. This Homo sapiens (Human) protein is Paternally-expressed gene 3 protein (PEG3).